The following is a 272-amino-acid chain: Pyrroline-5-carboxylate reductase 3 (272 aa).

Belongs to the pyrroline-5-carboxylate reductase family.

It is found in the cytoplasm. It catalyses the reaction L-proline + NADP(+) = (S)-1-pyrroline-5-carboxylate + NADPH + 2 H(+). The catalysed reaction is L-proline + NAD(+) = (S)-1-pyrroline-5-carboxylate + NADH + 2 H(+). The protein operates within amino-acid biosynthesis; L-proline biosynthesis; L-proline from L-glutamate 5-semialdehyde: step 1/1. Catalyzes the reduction of 1-pyrroline-5-carboxylate (PCA) to L-proline. The sequence is that of Pyrroline-5-carboxylate reductase 3 (proG) from Bacillus subtilis (strain 168).